A 330-amino-acid chain; its full sequence is MKKSFIHQQEEISFVKNTFTQYLIAKLDVVEVQGPILSRVGDGMQDNLSGVENPVSVHVLNIPNATFEVVHSLAKWKRHTLARFGFNEGEGLVVNMKALRPDEDSLDQTHSVYVDQWDWEKVIPDGQRNLAYLKETVETIYKVIRLTELAVEARYDIEAVLPKKITFIHTEELVARYPDLTPKERENAITKEFGAVFLIGIGGVLPDGKPHDGRAPDYDDWTSESENGYHGLNGDILVWNEQLGTAFELSSMGIRVDEEALKRQVDITGDQERLQFDWHKSLLNGLFPLTIGGGIGQSRMAMFLLRKKHIGEVQTSVWPQEVRDTYDNIL.

Belongs to the class-II aminoacyl-tRNA synthetase family. AsnA subfamily.

Its subcellular location is the cytoplasm. It catalyses the reaction L-aspartate + NH4(+) + ATP = L-asparagine + AMP + diphosphate + H(+). The protein operates within amino-acid biosynthesis; L-asparagine biosynthesis; L-asparagine from L-aspartate (ammonia route): step 1/1. In Streptococcus equi subsp. zooepidemicus (strain H70), this protein is Aspartate--ammonia ligase.